Reading from the N-terminus, the 438-residue chain is Thymidine phosphorylase (438 aa).

Belongs to the thymidine/pyrimidine-nucleoside phosphorylase family. Homodimer.

The enzyme catalyses thymidine + phosphate = 2-deoxy-alpha-D-ribose 1-phosphate + thymine. The protein operates within pyrimidine metabolism; dTMP biosynthesis via salvage pathway; dTMP from thymine: step 1/2. Its function is as follows. The enzymes which catalyze the reversible phosphorolysis of pyrimidine nucleosides are involved in the degradation of these compounds and in their utilization as carbon and energy sources, or in the rescue of pyrimidine bases for nucleotide synthesis. This chain is Thymidine phosphorylase, found in Colwellia psychrerythraea (strain 34H / ATCC BAA-681) (Vibrio psychroerythus).